A 621-amino-acid chain; its full sequence is MATNPGLFTEWPWKKLGSFKYVLLAPWVAHGWYEVATKGWREVDLGYIAILPSLLLRMLHNQAWITISRLQNARGRRQIVRRGIEFDQVDRERNWDDQIILSGILLYLGALYVPGGQHLPLWRTDGAGLIALLHAGPVEFLYYWFHRALHHHFLYTHYHSHHHSSIVTEPITSVIHPFAELVAYELLFSIPLIACALTGTASIIAFEMYLIYIDFMNNMGHCNFELVPSWLFTWFPPLKYLMYTPSFHSLHHTQFRTNYSLFMPFYDYIYNTMDKSSDTLYENSLKNNEEEEAVDVVHLTHLTTLHSIYHMRPGFAEFASRPYVSRWYMRMMWPLSWLSMVLTWTYGSSFTVERNVMKKIRMQSWAIPRYSFHYGLDWEKEAINDLIEKAVCEADKNGAKVVSLGLLNQAHTLNKSGEQYLLKYPKLGARIVDGTSLAAAVVVNSIPQGTDQVILAGNVSKVARAVAQALCKKNIKVTMTNKQDYHLLKPEIPETVADNLSFSKTGTAKVWLIGDGLDSAEQFRAQKGTLFIPYSQFPPKMVRKDSCSYSTTPAMAVPKTLQNVHSCENWLPRRVMSAWRIAGILHALEGWNEHECGDKVLDMDKVWSAAIMHGFCPVAQG.

Helical transmembrane passes span 99–119 (IILSGILLYLGALYVPGGQHL), 126–146 (GAGLIALLHAGPVEFLYYWFH), 186–206 (LLFSIPLIACALTGTASIIAF), 224–244 (FELVPSWLFTWFPPLKYLMYT), and 332–352 (MWPLSWLSMVLTWTYGSSFTV). Residues 138–272 (VEFLYYWFHR…MPFYDYIYNT (135 aa)) enclose the Fatty acid hydroxylase domain.

Belongs to the sterol desaturase family. Homodimer. In terms of tissue distribution, expressed in panicles, developing spikelets, stamens and hulls and, at low levels, in roots, developing seeds, flag leaves and seedling shoots. Strongly expressed in the epidermal cells of anthers.

Its subcellular location is the endoplasmic reticulum membrane. The enzyme catalyses a long-chain fatty aldehyde + 2 NADPH + O2 + H(+) = a long-chain alkane + formate + 2 NADP(+) + H2O. Aldehyde decarbonylase involved in the conversion of aldehydes to alkanes. Core component of a very-long-chain alkane synthesis complex. Required for the biosynthesis of very-long-chain fatty acids (including polyesters) in cuticles, anther tapetum and pollen exine. The chain is Very-long-chain aldehyde decarbonylase GL1-5 from Oryza sativa subsp. japonica (Rice).